Consider the following 613-residue polypeptide: MADGVFQGAIGIDLGTTYSCVATYESSVEIIANEQGNRVTPSFVAFTPEERLIGDAAKNQAALNPKNTVFDAKRLIGRRFDEESVQNDMKTWPFKVVDVDGAPVIEVEYLGENKQFSPQEISSMVLTKMKEIAEAKIGKKVEKAVITVPAYFNDAQRQATKDAGAISGLNVLRIINEPTAAAIAYGLGAGKSDKERHVLIFDLGGGTFDVSLLHIAGGVYTVKSTSGNTHLGGQDFDTNLLEHFKGEFKKKTGLDISNDARALRRLRTAAERAKRTLSSVTQTTVEVDSLFEGEDFEASLTRARFEDLNAALFKSTLEPVEQVLKDAKISKSQIDEVVLVGGSTRIPKVQKLLSDYFDGKQLEKSINPDEAVAYGAAVQGAILTGQSTSDETKDLLLLDVAPLSLGVGMQGDIFGVVVPRNTTVPTIKRRTFTTVGDNQTTVQFPVYQGERVNCKENTLLGEFDLKNIPPMPAGEPVLEAIFEVDANGILKVTAVEKSTGKSANITISNAVGRLSSEDIEKMVNQAEEFKAADEAFAKRHEAKQRLESYVASIEQTVTDPVLSSKLKRGSKTKIEAALADALSALQIEDGSAEEYRKAEVGLKRVVTKAMSSR.

Residues 1–391 are nucleotide binding domain (NBD); it reads MADGVFQGAI…ILTGQSTSDE (391 aa). Residues 16 to 18, Lys-73, 205 to 207, 271 to 278, and Gly-342 each bind ATP; these read TTY, GGT, and ERAKRTLS. The tract at residues 392–402 is inter-domain linker; the sequence is TKDLLLLDVAP. The interval 403–613 is substrate binding domain (SBD); sequence LSLGVGMQGD…RVVTKAMSSR (211 aa). The interval 516-612 is lid domain (SBDalpha); that stretch reads SEDIEKMVNQ…KRVVTKAMSS (97 aa). The short motif at 574-582 is the Nuclear export signal element; that stretch reads IEAALADAL.

The protein belongs to the heat shock protein 70 family. Ssb-type Hsp70 subfamily. As to quaternary structure, binds to ribosomes. Binds close to the ribosomal tunnel exit via contacts with both ribosomal proteins and rRNA. Directly interacts with nascent polypeptides. This interaction is dependent on the ribosome-associated complex (RAC). Interacts with SSE1. Interacts with FES1.

Its subcellular location is the cytoplasm. The enzyme catalyses ATP + H2O = ADP + phosphate + H(+). In terms of biological role, ribosome-bound, Hsp70-type chaperone that assists in the cotranslational folding of newly synthesized proteins in the cytosol. Stimulates folding by interacting with nascent chains, binding to short, largely hydrophobic sequences exposed by unfolded proteins, thereby stabilizing longer, more slowly translated, and aggregation-prone nascent polypeptides and domains that cannot fold stably until fully synthesized. The Hsp70-protein substrate interaction depends on ATP-binding and on allosteric regulation between the NBD and the SBD. The ATP-bound state is characterized by a fast exchange rate of substrate (low affinity state), while in the ADP-bound state exchange is much slower (high affinity state). During the Hsp70 cycle, the chaperone switches between the ATP-bound state (open conformation) and the ADP-bound state (closed conformation) by major conformational rearrangements involving mainly the lid domain. Ssb cooperates with a specific Hsp40/Hsp70 co-chaperone termed the ribosome-associated complex (RAC), which stimulates the ATPase activity of the ribosome-associated pool of Ssbs and switches it to the high affinity substrate binding state. Hsp110 chaperone SSE1 and FES1 act as nucleotide exchange factors that cause substrate release. This is Ribosome-associated molecular chaperone SSB (SSB1) from Candida glabrata (strain ATCC 2001 / BCRC 20586 / JCM 3761 / NBRC 0622 / NRRL Y-65 / CBS 138) (Yeast).